A 320-amino-acid chain; its full sequence is ATP-dependent 6-phosphofructokinase (320 aa).

ATP is bound at residue Gly-12. Residues 22–26 (RGVVR) and 55–60 (RYSVSD) contribute to the ADP site. ATP-binding positions include 73–74 (RF) and 103–106 (GDGS). Mg(2+) is bound at residue Asp-104. 126 to 128 (TID) contributes to the substrate binding site. The active-site Proton acceptor is Asp-128. Position 155 (Arg-155) interacts with ADP. Substrate-binding positions include Arg-163 and 170–172 (MGR). ADP is bound by residues 186-188 (GCE), Lys-212, and 214-216 (KKH). Substrate is bound by residues Glu-223, Arg-244, and 250-253 (HIQR).

It belongs to the phosphofructokinase type A (PFKA) family. ATP-dependent PFK group I subfamily. Prokaryotic clade 'B1' sub-subfamily. Homotetramer. The cofactor is Mg(2+).

Its subcellular location is the cytoplasm. The catalysed reaction is beta-D-fructose 6-phosphate + ATP = beta-D-fructose 1,6-bisphosphate + ADP + H(+). The protein operates within carbohydrate degradation; glycolysis; D-glyceraldehyde 3-phosphate and glycerone phosphate from D-glucose: step 3/4. Its activity is regulated as follows. Allosterically activated by ADP and other diphosphonucleosides, and allosterically inhibited by phosphoenolpyruvate. Functionally, catalyzes the phosphorylation of D-fructose 6-phosphate to fructose 1,6-bisphosphate by ATP, the first committing step of glycolysis. This chain is ATP-dependent 6-phosphofructokinase, found in Enterobacter cloacae.